The primary structure comprises 540 residues: Glucose-6-phosphate isomerase (540 aa).

E350 acts as the Proton donor in catalysis. Catalysis depends on residues H381 and K503.

Belongs to the GPI family.

The protein localises to the cytoplasm. It catalyses the reaction alpha-D-glucose 6-phosphate = beta-D-fructose 6-phosphate. It participates in carbohydrate biosynthesis; gluconeogenesis. It functions in the pathway carbohydrate degradation; glycolysis; D-glyceraldehyde 3-phosphate and glycerone phosphate from D-glucose: step 2/4. Functionally, catalyzes the reversible isomerization of glucose-6-phosphate to fructose-6-phosphate. The sequence is that of Glucose-6-phosphate isomerase from Burkholderia cenocepacia (strain ATCC BAA-245 / DSM 16553 / LMG 16656 / NCTC 13227 / J2315 / CF5610) (Burkholderia cepacia (strain J2315)).